Reading from the N-terminus, the 1368-residue chain is DNA-directed RNA polymerase subunit beta (1368 aa).

It belongs to the RNA polymerase beta chain family. The RNAP catalytic core consists of 2 alpha, 1 beta, 1 beta' and 1 omega subunit. When a sigma factor is associated with the core the holoenzyme is formed, which can initiate transcription.

It carries out the reaction RNA(n) + a ribonucleoside 5'-triphosphate = RNA(n+1) + diphosphate. DNA-dependent RNA polymerase catalyzes the transcription of DNA into RNA using the four ribonucleoside triphosphates as substrates. The sequence is that of DNA-directed RNA polymerase subunit beta from Janthinobacterium sp. (strain Marseille) (Minibacterium massiliensis).